Consider the following 239-residue polypeptide: Leucyl/phenylalanyl-tRNA--protein transferase (239 aa).

The protein belongs to the L/F-transferase family.

The protein resides in the cytoplasm. It catalyses the reaction N-terminal L-lysyl-[protein] + L-leucyl-tRNA(Leu) = N-terminal L-leucyl-L-lysyl-[protein] + tRNA(Leu) + H(+). The catalysed reaction is N-terminal L-arginyl-[protein] + L-leucyl-tRNA(Leu) = N-terminal L-leucyl-L-arginyl-[protein] + tRNA(Leu) + H(+). The enzyme catalyses L-phenylalanyl-tRNA(Phe) + an N-terminal L-alpha-aminoacyl-[protein] = an N-terminal L-phenylalanyl-L-alpha-aminoacyl-[protein] + tRNA(Phe). In terms of biological role, functions in the N-end rule pathway of protein degradation where it conjugates Leu, Phe and, less efficiently, Met from aminoacyl-tRNAs to the N-termini of proteins containing an N-terminal arginine or lysine. The chain is Leucyl/phenylalanyl-tRNA--protein transferase from Syntrophus aciditrophicus (strain SB).